We begin with the raw amino-acid sequence, 215 residues long: Cytidylate kinase (215 aa).

10 to 18 provides a ligand contact to ATP; the sequence is GPAAAGKST.

Belongs to the cytidylate kinase family. Type 1 subfamily.

The protein localises to the cytoplasm. It carries out the reaction CMP + ATP = CDP + ADP. It catalyses the reaction dCMP + ATP = dCDP + ADP. This is Cytidylate kinase from Staphylococcus epidermidis (strain ATCC 35984 / DSM 28319 / BCRC 17069 / CCUG 31568 / BM 3577 / RP62A).